Reading from the N-terminus, the 157-residue chain is Transcriptional regulator MraZ (157 aa).

SpoVT-AbrB domains are found at residues 7–54 (TYEC…PMKE) and 83–126 (VRII…DKDL).

The protein belongs to the MraZ family. Forms oligomers.

The protein localises to the cytoplasm. The protein resides in the nucleoid. The sequence is that of Transcriptional regulator MraZ from Flavobacterium psychrophilum (strain ATCC 49511 / DSM 21280 / CIP 103535 / JIP02/86).